We begin with the raw amino-acid sequence, 312 residues long: MEFKHVPILLNECIENLNIRDGKIYVDCTVGGAGHSREIAKRIGNGKLICFDQDEDALKVAKQRLEEFGDKIIFIKDNFKNIKNDLHNLGIEKVDGILMDIGVSSYQIDEDSRGFSYMHDADLDMRMDQSNPISAKDIVNTYSKEDLENVIFKYSDEKWAKRIAEFICNARETKPINTTFELVEVIEKAIPKKVRMNQKGHSAKKTFQAIRIEVNKELDVLEQAVGDSIDLLNPEGRICIITFHSLEDKICKDIFRQRQKGCICPPEIPVCVCNHKPEIKIITRKPIEPSKEELEQNSRARSAKLRVAEKII.

Residues 33 to 35, aspartate 52, phenylalanine 79, aspartate 100, and glutamine 107 each bind S-adenosyl-L-methionine; that span reads AGH.

The protein belongs to the methyltransferase superfamily. RsmH family.

It is found in the cytoplasm. It catalyses the reaction cytidine(1402) in 16S rRNA + S-adenosyl-L-methionine = N(4)-methylcytidine(1402) in 16S rRNA + S-adenosyl-L-homocysteine + H(+). Functionally, specifically methylates the N4 position of cytidine in position 1402 (C1402) of 16S rRNA. This is Ribosomal RNA small subunit methyltransferase H from Finegoldia magna (strain ATCC 29328 / DSM 20472 / WAL 2508) (Peptostreptococcus magnus).